A 178-amino-acid chain; its full sequence is Putative adenylate kinase (178 aa).

ATP-binding residues include Gly-10, Gly-12, Lys-13, Ser-14, and Ser-15. The segment at 29–50 (TVVELAEKHGCIIDEEDGEIVI) is NMP. Residues 94-104 (GRNWSEEKLLE) form an LID region. ATP is bound at residue Arg-95.

It belongs to the adenylate kinase family. AK6 subfamily. In terms of assembly, interacts with uS11. Not a structural component of 40S pre-ribosomes, but transiently interacts with them by binding to uS11.

It carries out the reaction AMP + ATP = 2 ADP. The catalysed reaction is ATP + H2O = ADP + phosphate + H(+). Broad-specificity nucleoside monophosphate (NMP) kinase that catalyzes the reversible transfer of the terminal phosphate group between nucleoside triphosphates and monophosphates. Also has ATPase activity. Involved in the late maturation steps of the 30S ribosomal particles, specifically 16S rRNA maturation. While NMP activity is not required for ribosome maturation, ATPase activity is. Associates transiently with small ribosomal subunit protein uS11. ATP hydrolysis breaks the interaction with uS11. May temporarily remove uS11 from the ribosome to enable a conformational change of the ribosomal RNA that is needed for the final maturation step of the small ribosomal subunit. The polypeptide is Putative adenylate kinase (Archaeoglobus fulgidus (strain ATCC 49558 / DSM 4304 / JCM 9628 / NBRC 100126 / VC-16)).